We begin with the raw amino-acid sequence, 243 residues long: MAIRVKNLNFFYGSSQTLFDINLEAEEGDTVVLLGPSGAGKSTLIRTLNLLEVPKSGELSIANNEFNLSNAMANPKAIQQLRQDVGMVFQQYHLWPHLTVIENLIEAPMKVRGVSENEAKTDAMELLKRLRLEQLADRFPLHLSGGQQQRVAIARALMMKPQVLLFDEPTAALDPEITAQVVDIIKELQETGITQVIVTHEVNVAQKVATKVVYMEQGKIVEMGSADCFENPKTEQFKHYLSH.

The region spanning isoleucine 3–serine 242 is the ABC transporter domain. Residue glycine 35 to serine 42 coordinates ATP.

Belongs to the ABC transporter superfamily. The complex is composed of two ATP-binding proteins (ArtP), two transmembrane proteins (ArtM and ArtQ) and a solute-binding protein (ArtI).

It is found in the cell inner membrane. It carries out the reaction a polar amino acid(out) + ATP + H2O = a polar amino acid(in) + ADP + phosphate + H(+). The enzyme catalyses L-arginine(out) + ATP + H2O = L-arginine(in) + ADP + phosphate + H(+). In terms of biological role, part of the ABC transporter complex ArtPIQM involved in arginine transport. Probably responsible for energy coupling to the transport system. The sequence is that of Arginine transport ATP-binding protein ArtP (artP) from Haemophilus influenzae (strain ATCC 51907 / DSM 11121 / KW20 / Rd).